The chain runs to 172 residues: Photosystem I assembly protein Ycf3 (172 aa).

3 TPR repeats span residues 35–70, 74–107, and 122–155; these read AFTY…EIDP, SYIL…NPFL, and GEQA…TPGN.

It belongs to the Ycf3 family.

The protein resides in the plastid. It localises to the chloroplast thylakoid membrane. Functionally, essential for the assembly of the photosystem I (PSI) complex. May act as a chaperone-like factor to guide the assembly of the PSI subunits. In Sorghum bicolor (Sorghum), this protein is Photosystem I assembly protein Ycf3.